Reading from the N-terminus, the 210-residue chain is Methylthioribulose-1-phosphate dehydratase (210 aa).

His97 and His99 together coordinate Zn(2+).

This sequence belongs to the aldolase class II family. MtnB subfamily. Homotetramer. It depends on Zn(2+) as a cofactor.

The catalysed reaction is 5-(methylsulfanyl)-D-ribulose 1-phosphate = 5-methylsulfanyl-2,3-dioxopentyl phosphate + H2O. It functions in the pathway amino-acid biosynthesis; L-methionine biosynthesis via salvage pathway; L-methionine from S-methyl-5-thio-alpha-D-ribose 1-phosphate: step 2/6. Functionally, catalyzes the dehydration of methylthioribulose-1-phosphate (MTRu-1-P) into 2,3-diketo-5-methylthiopentyl-1-phosphate (DK-MTP-1-P). This chain is Methylthioribulose-1-phosphate dehydratase, found in Geobacillus kaustophilus (strain HTA426).